The primary structure comprises 962 residues: Ubiquitin carboxyl-terminal hydrolase 4 (962 aa).

In terms of domain architecture, DUSP spans 11-122 (PDVETQKTEL…GQQPIVRKVV (112 aa)). Residues 27-216 (TLQRGAQWYL…LYQGQVLVIE (190 aa)) are necessary for interaction with SART3. Residues 133-141 (VEVYLLELK) carry the Nuclear export signal motif. The Ubiquitin-like 1 domain maps to 142 to 226 (LCENSDPTNV…PQNEDGTWPR (85 aa)). A disordered region spans residues 220 to 249 (EDGTWPRQSLQSKSSTAPSRNFTTSSKPSA). Residues 225–249 (PRQSLQSKSSTAPSRNFTTSSKPSA) show a composition bias toward polar residues. A required for USP4 activation by providing conformational flexibility between the DUSP and catalytic domains region spans residues 229-295 (LQSKSSTAPS…SYNCQEPPSP (67 aa)). The region spanning 302 to 922 (CGLGNLGNTC…AAYVLFYQRR (621 aa)) is the USP domain. The Nucleophile role is filled by Cys-311. The segment at 384–386 (PQF) is regulates ubiquitin dissociation. Residues 405–407 (LHE) form a necessary for interaction with RBL2 region. Phosphoserine is present on Ser-445. The segment at 459–463 (LVCPE) is necessary for interaction with RB1 and RBL2. 2 residues coordinate Zn(2+): Cys-461 and Cys-464. The Ubiquitin-like 2 domain occupies 483-571 (LKKDRIMEVF…IFVYEVCNTS (89 aa)). An interacts with DUSP and ubiquitin-like 1 domains and is required for USP4 activation region spans residues 485-774 (KDRIMEVFLV…SQPQKKKKAA (290 aa)). Residues 638–699 (EFLSSPLEPG…SESAQKVKGQ (62 aa)) form a disordered region. The residue at position 655 (Ser-655) is a Phosphoserine. Over residues 657 to 666 (EGDEEEEMDH) the composition is skewed to acidic residues. 2 positions are modified to phosphoserine: Ser-675 and Ser-680. A Nuclear localization signal motif is present at residues 766-771 (QPQKKK). Residues Cys-798 and Cys-801 each contribute to the Zn(2+) site. The Proton acceptor role is filled by His-880. Low complexity predominate over residues 928–937 (STSSLGSFPG). The tract at residues 928-962 (STSSLGSFPGSDGGVKLSSSHQGMGDEEAYNMDTN) is disordered. Positions 952 to 962 (GDEEAYNMDTN) are enriched in acidic residues.

This sequence belongs to the peptidase C19 family. USP4 subfamily. Interacts with RB1 (both dephosphorylated and hypophosphorylated forms). Interacts with RBL1 and RBL2. Interacts with ADORA2A (via cytoplasmic C-terminus); the interaction is direct. Interacts with SART3; recruits USP4 to its substrate PRPF3. In terms of processing, phosphorylated at Ser-445 by PKB/AKT1 in response to EGF stimulus, promoting its ability deubiquitinate RHEB. Monoubiquitinated by TRIM21. Ubiquitination does not lead to its proteasomal degradation. Autodeubiquitinated. As to expression, expressed in brain, kidney, liver and spleen (at protein level).

The protein localises to the cytoplasm. It is found in the nucleus. The enzyme catalyses Thiol-dependent hydrolysis of ester, thioester, amide, peptide and isopeptide bonds formed by the C-terminal Gly of ubiquitin (a 76-residue protein attached to proteins as an intracellular targeting signal).. With respect to regulation, the completion of the deubiquitinase reaction is mediated by the DUSP and ubiquitin-like 1 domains which promotes the release of ubiquitin from the catalytic site enabling subsequent reactions to occur. In terms of biological role, deubiquitinating enzyme that removes conjugated ubiquitin from target proteins. Deubiquitinates PDPK1. Deubiquitinates TRIM21. Deubiquitinates receptor ADORA2A which increases the amount of functional receptor at the cell surface. Deubiquitinates HAS2. Deubiquitinates RHEB in response to EGF signaling, promoting mTORC1 signaling. May regulate mRNA splicing through deubiquitination of the U4 spliceosomal protein PRPF3. This may prevent its recognition by the U5 component PRPF8 thereby destabilizing interactions within the U4/U6.U5 snRNP. May also play a role in the regulation of quality control in the ER. The polypeptide is Ubiquitin carboxyl-terminal hydrolase 4 (Usp4) (Mus musculus (Mouse)).